A 469-amino-acid polypeptide reads, in one-letter code: MSEVRVRFAPSPTGYLHVGGARTALFNYLYARKTGGKFILRIEDTDLERSEKVFEEQLISALKWLGLEWDEGPDIGGQYGPYRQSERVHLYHEYAQKLIEEGKAYEVYAYPEEIEQLREKLLSEGKAPHYTREMLEPYNTPERKKEYEEKGLKPAVYFSMLRKDYVINDVVKGEVVFKAGSVGDFALLRSNGMPTYNYACVIDDGLMKITHVLRGDDHLSNTVKQVALYEAFGWPTPVFGHVSMILGPDGSKLSKRHGATSVEEFKSRGYLPEALVNFLALLGWSHPEGKEILTKQELIESFSLERLVKNPAIFNPEKLKWMNSEHIRMKSMDELVKIAKPFLQKDVDDEYFAKILHAVKDRIEELSQLPELTDIFFEKPHQLPEKTPEAIETYTNLLSELKKIEKWDKDSIYAAFKTAMKSAKLKGKDFYMTLRLVLTGKTEGPELIDILEILGKDEVIERISLYLNK.

The short motif at 10–20 (PSPTGYLHVGG) is the 'HIGH' region element. Positions 252–256 (KLSKR) match the 'KMSKS' region motif. Lys255 contributes to the ATP binding site.

This sequence belongs to the class-I aminoacyl-tRNA synthetase family. Glutamate--tRNA ligase type 1 subfamily. As to quaternary structure, monomer.

It localises to the cytoplasm. The enzyme catalyses tRNA(Glu) + L-glutamate + ATP = L-glutamyl-tRNA(Glu) + AMP + diphosphate. Catalyzes the attachment of glutamate to tRNA(Glu) in a two-step reaction: glutamate is first activated by ATP to form Glu-AMP and then transferred to the acceptor end of tRNA(Glu). This is Glutamate--tRNA ligase 1 from Fervidobacterium nodosum (strain ATCC 35602 / DSM 5306 / Rt17-B1).